The chain runs to 269 residues: tRNA pseudouridine synthase A (269 aa).

The active-site Nucleophile is aspartate 51. Position 109 (tyrosine 109) interacts with substrate.

Belongs to the tRNA pseudouridine synthase TruA family. Homodimer.

It carries out the reaction uridine(38/39/40) in tRNA = pseudouridine(38/39/40) in tRNA. Its function is as follows. Formation of pseudouridine at positions 38, 39 and 40 in the anticodon stem and loop of transfer RNAs. The protein is tRNA pseudouridine synthase A of Aeromonas hydrophila subsp. hydrophila (strain ATCC 7966 / DSM 30187 / BCRC 13018 / CCUG 14551 / JCM 1027 / KCTC 2358 / NCIMB 9240 / NCTC 8049).